Reading from the N-terminus, the 662-residue chain is Protein Aster-C (662 aa).

Positions 1–33 (MEGALTARQIVNEGDSSLATELQEEPEESPGPV) are disordered. The region spanning 70-176 (EYRQQFTHLP…LIIFRLWQNV (107 aa)) is the GRAM domain. The interval 212–294 (VEENVQPRSP…EKRISRAPSK (83 aa)) is disordered. The span at 240–250 (VSFTQESVSRA) shows a compositional bias: polar residues. A compositionally biased stretch (basic and acidic residues) spans 265–276 (LGKEDSQSERNV). The VASt domain maps to 326–497 (QGRLYINRVF…DLLMEESVLS (172 aa)). The disordered stretch occupies residues 506 to 530 (HSSLRRRRRTLNRTAEPVPKLSSQR). Basic residues predominate over residues 507–516 (SSLRRRRRTL). The chain crosses the membrane as a helical span at residues 557 to 577 (LIVVMSIFLLLLVLLNVTLFL).

As to expression, highly expressed in the liver. Also found in the testis.

It is found in the endoplasmic reticulum membrane. The protein resides in the cell membrane. Functionally, cholesterol transporter that mediates non-vesicular transport of cholesterol from the plasma membrane (PM) to the endoplasmic reticulum (ER). Contains unique domains for binding cholesterol and the PM, thereby serving as a molecular bridge for the transfer of cholesterol from the PM to the ER. Plays a crucial role in cholesterol homeostasis and has the unique ability to localize to the PM based on the level of membrane cholesterol. In lipid-poor conditions localizes to the ER membrane and in response to excess cholesterol in the PM is recruited to the endoplasmic reticulum-plasma membrane contact sites (EPCS) which is mediated by the GRAM domain. At the EPCS, the sterol-binding VASt/ASTER domain binds to the cholesterol in the PM and facilitates its transfer from the PM to ER. This is Protein Aster-C (Gramd1c) from Mus musculus (Mouse).